A 266-amino-acid polypeptide reads, in one-letter code: 4-hydroxy-tetrahydrodipicolinate reductase (266 aa).

10–15 (GPRGRM) provides a ligand contact to NAD(+). Residue Lys38 coordinates NADP(+). NAD(+)-binding positions include 99–101 (GTT) and 125–128 (APNF). His155 acts as the Proton donor/acceptor in catalysis. His156 provides a ligand contact to (S)-2,3,4,5-tetrahydrodipicolinate. Lys159 acts as the Proton donor in catalysis. Residue 165 to 166 (GT) coordinates (S)-2,3,4,5-tetrahydrodipicolinate.

It belongs to the DapB family.

Its subcellular location is the cytoplasm. It catalyses the reaction (S)-2,3,4,5-tetrahydrodipicolinate + NAD(+) + H2O = (2S,4S)-4-hydroxy-2,3,4,5-tetrahydrodipicolinate + NADH + H(+). It carries out the reaction (S)-2,3,4,5-tetrahydrodipicolinate + NADP(+) + H2O = (2S,4S)-4-hydroxy-2,3,4,5-tetrahydrodipicolinate + NADPH + H(+). It functions in the pathway amino-acid biosynthesis; L-lysine biosynthesis via DAP pathway; (S)-tetrahydrodipicolinate from L-aspartate: step 4/4. Catalyzes the conversion of 4-hydroxy-tetrahydrodipicolinate (HTPA) to tetrahydrodipicolinate. This is 4-hydroxy-tetrahydrodipicolinate reductase from Bacillus cereus (strain ZK / E33L).